The sequence spans 248 residues: Probable transcriptional regulatory protein Acel_1346 (248 aa).

Belongs to the TACO1 family.

It is found in the cytoplasm. This is Probable transcriptional regulatory protein Acel_1346 from Acidothermus cellulolyticus (strain ATCC 43068 / DSM 8971 / 11B).